We begin with the raw amino-acid sequence, 533 residues long: T-complex protein 1 subunit delta (533 aa).

Polar residues predominate over residues 1 to 15 (MAQSQVGKGSPSNAT). The disordered stretch occupies residues 1 to 25 (MAQSQVGKGSPSNATFRDKEKPQEV). Over residues 16-25 (FRDKEKPQEV) the composition is skewed to basic and acidic residues.

Belongs to the TCP-1 chaperonin family. Heterooligomeric complex of about 850 to 900 kDa that forms two stacked rings, 12 to 16 nm in diameter.

Its subcellular location is the cytoplasm. Its function is as follows. Molecular chaperone; assists the folding of proteins upon ATP hydrolysis. Known to play a role, in vitro, in the folding of actin and tubulin. In Debaryomyces hansenii (strain ATCC 36239 / CBS 767 / BCRC 21394 / JCM 1990 / NBRC 0083 / IGC 2968) (Yeast), this protein is T-complex protein 1 subunit delta (CCT4).